The following is a 230-amino-acid chain: Androgen-dependent TFPI-regulating protein (230 aa).

Over 1–7 the chain is Cytoplasmic; sequence MTKTTTC. Residues 8 to 28 traverse the membrane as a helical segment; that stretch reads VYHFLVLNWYIFLNYHIPQIG. The Extracellular segment spans residues 29 to 45; sequence RNEEKLREFHDGGRSKY. A helical membrane pass occupies residues 46-66; that stretch reads LTLLNLLLQAIFFGVACLDDV. Topologically, residues 67–85 are cytoplasmic; the sequence is LKRVIGRKDIKFVTSFRDL. Residues 86–106 traverse the membrane as a helical segment; sequence LFTTMAFPISTFVFLVFWTLF. The Extracellular segment spans residues 107-120; sequence HYDRSLVYPKGLDD. The helical transmembrane segment at 121 to 141 threads the bilayer; sequence FFPAWVNHAMHTSIFPFSLFE. Over 142–154 the chain is Cytoplasmic; the sequence is TILRPHNYPSKKL. The chain crosses the membrane as a helical span at residues 155–175; it reads GLTLLGAFNFAYIIRILWRYV. Residues 176-190 lie on the Extracellular side of the membrane; sequence QTGNWVYPVFDSLSP. A helical transmembrane segment spans residues 191 to 211; the sequence is LGIIIFFSAAYILVAGIYLFG. The Cytoplasmic portion of the chain corresponds to 212-230; sequence EKINHWKWGAIAKPQMKKN.

This sequence belongs to the AIG1 family.

It localises to the cell membrane. The catalysed reaction is 9-hexadecanoyloxy-octadecanoate + H2O = 9-hydroxy-octadecanoate + hexadecanoate + H(+). The enzyme catalyses 12-hexadecanoyloxy-octadecanoate + H2O = 12-hydroxyoctadecanoate + hexadecanoate + H(+). It carries out the reaction 9-(9Z-hexadecenoyloxy)-octadecanoate + H2O = (9Z)-hexadecenoate + 9-hydroxy-octadecanoate + H(+). It catalyses the reaction 12-(9Z-hexadecenoyloxy)-octadecanoate + H2O = 12-hydroxyoctadecanoate + (9Z)-hexadecenoate + H(+). The catalysed reaction is 13-(9Z-hexadecenoyloxy)-octadecanoate + H2O = 13-hydroxy-octadecanoate + (9Z)-hexadecenoate + H(+). The enzyme catalyses 9-octadecanoyloxy-octadecanoate + H2O = 9-hydroxy-octadecanoate + octadecanoate + H(+). It carries out the reaction 12-octadecanoyloxy-octadecanoate + H2O = 12-hydroxyoctadecanoate + octadecanoate + H(+). It catalyses the reaction 13-octadecanoyloxy-octadecanoate + H2O = 13-hydroxy-octadecanoate + octadecanoate + H(+). The catalysed reaction is 9-(9Z-octadecenoyloxy)-octadecanoate + H2O = 9-hydroxy-octadecanoate + (9Z)-octadecenoate + H(+). The enzyme catalyses 12-(9Z-octadecenoyloxy)-octadecanoate + H2O = 12-hydroxyoctadecanoate + (9Z)-octadecenoate + H(+). It carries out the reaction 13-(9Z-octadecenoyloxy)-octadecanoate + H2O = 13-hydroxy-octadecanoate + (9Z)-octadecenoate + H(+). It catalyses the reaction 5-(9Z-octadecenoyloxy)-octadecanoate + H2O = 5-hydroxy-octadecanoate + (9Z)-octadecenoate + H(+). In terms of biological role, hydrolyzes bioactive fatty-acid esters of hydroxy-fatty acids (FAHFAs), but not other major classes of lipids. Shows a preference for FAHFAs with branching distal from the carboxylate head group of the lipids. Regulates the expression and the cell-associated anticoagulant activity of the inhibitor TFPI in endothelial cells (in vitro). This Mus musculus (Mouse) protein is Androgen-dependent TFPI-regulating protein (Adtrp).